Here is a 392-residue protein sequence, read N- to C-terminus: S-adenosylmethionine synthase (392 aa).

Histidine 17 lines the ATP pocket. Aspartate 19 contributes to the Mg(2+) binding site. Residue glutamate 45 participates in K(+) binding. L-methionine-binding residues include glutamate 58 and glutamine 102. The segment at 102-112 is flexible loop; it reads QSADIAQGVDA. ATP is bound by residues 169-171, 235-236, aspartate 244, 250-251, alanine 267, and lysine 271; these read DAK, KF, and RK. Position 244 (aspartate 244) interacts with L-methionine. Lysine 275 serves as a coordination point for L-methionine.

This sequence belongs to the AdoMet synthase family. In terms of assembly, homotetramer; dimer of dimers. Mg(2+) is required as a cofactor. It depends on K(+) as a cofactor.

The protein resides in the cytoplasm. It catalyses the reaction L-methionine + ATP + H2O = S-adenosyl-L-methionine + phosphate + diphosphate. The protein operates within amino-acid biosynthesis; S-adenosyl-L-methionine biosynthesis; S-adenosyl-L-methionine from L-methionine: step 1/1. Functionally, catalyzes the formation of S-adenosylmethionine (AdoMet) from methionine and ATP. The overall synthetic reaction is composed of two sequential steps, AdoMet formation and the subsequent tripolyphosphate hydrolysis which occurs prior to release of AdoMet from the enzyme. This is S-adenosylmethionine synthase from Methylobacterium nodulans (strain LMG 21967 / CNCM I-2342 / ORS 2060).